A 426-amino-acid chain; its full sequence is Serine--tRNA ligase (426 aa).

L-serine is bound at residue 235-237 (TAE). Residue 266–268 (RRE) coordinates ATP. Position 289 (Glu-289) interacts with L-serine. Residue 353–356 (EISS) participates in ATP binding. Ser-389 lines the L-serine pocket.

The protein belongs to the class-II aminoacyl-tRNA synthetase family. Type-1 seryl-tRNA synthetase subfamily. As to quaternary structure, homodimer. The tRNA molecule binds across the dimer.

The protein localises to the cytoplasm. It carries out the reaction tRNA(Ser) + L-serine + ATP = L-seryl-tRNA(Ser) + AMP + diphosphate + H(+). It catalyses the reaction tRNA(Sec) + L-serine + ATP = L-seryl-tRNA(Sec) + AMP + diphosphate + H(+). It functions in the pathway aminoacyl-tRNA biosynthesis; selenocysteinyl-tRNA(Sec) biosynthesis; L-seryl-tRNA(Sec) from L-serine and tRNA(Sec): step 1/1. In terms of biological role, catalyzes the attachment of serine to tRNA(Ser). Is also able to aminoacylate tRNA(Sec) with serine, to form the misacylated tRNA L-seryl-tRNA(Sec), which will be further converted into selenocysteinyl-tRNA(Sec). This Nostoc sp. (strain PCC 7120 / SAG 25.82 / UTEX 2576) protein is Serine--tRNA ligase.